A 467-amino-acid polypeptide reads, in one-letter code: Probable rhamnogalacturonase A (467 aa).

The first 19 residues, 1 to 19 (MHSLSLISLALLSPLLVNA), serve as a signal peptide directing secretion. Residues C40 and C66 are joined by a disulfide bond. Residue D217 is the Proton donor of the active site. An intrachain disulfide couples C219 to C236. N-linked (GlcNAc...) asparagine glycosylation is found at N237 and N252. H292 is an active-site residue. A glycan (N-linked (GlcNAc...) asparagine) is linked at N319. 2 cysteine pairs are disulfide-bonded: C342-C348 and C370-C379.

It belongs to the glycosyl hydrolase 28 family.

It is found in the secreted. The enzyme catalyses Endohydrolysis of alpha-D-GalA-(1-&gt;2)-alpha-L-Rha glycosidic bond in the rhamnogalacturonan I backbone with initial inversion of anomeric configuration releasing oligosaccharides with beta-D-GalA at the reducing end.. Functionally, pectinolytic enzymes consist of four classes of enzymes: pectine lyase, polygalacturonase, pectin methylesterase and rhamnogalacturonase. Hydrolyzes alpha-D-galacturonopyranosyl-(1,2)-alpha-L-rhamnopyranosyl linkages in the backbone of the hairy regions of pectins. The chain is Probable rhamnogalacturonase A (rhgA) from Aspergillus oryzae (strain ATCC 42149 / RIB 40) (Yellow koji mold).